Here is a 701-residue protein sequence, read N- to C-terminus: SH3 domain-binding protein 1 (701 aa).

A compositionally biased stretch (basic residues) spans 1-10 (MMKRQLHRMR). Disordered stretches follow at residues 1–23 (MMKR…RTPE) and 160–182 (SQAT…HSHT). The interval 1–275 (MMKRQLHRMR…TATHFPRVYG (275 aa)) is interaction with CGNL1. The region spanning 17–262 (SLGRTPETAE…RENHGQADHS (246 aa)) is the BAR domain. Residues serine 175, serine 241, serine 262, and serine 264 each carry the phosphoserine modification. The region spanning 276–469 (VSLATHLQEL…ALIQSADTLF (194 aa)) is the Rho-GAP domain. Residues 470–701 (PGDINFNVSG…RPRSLASETN (232 aa)) form an interaction with CD2AP region. Residues 496–701 (SEELPSTAVP…RPRSLASETN (206 aa)) form a disordered region. Residues 508–522 (ATTPAPAPAPAPAPA) are compositionally biased toward pro residues. 2 positions are modified to phosphoserine: serine 544 and serine 550. Pro residues-rich tracts occupy residues 570–579 (PARPTMPPPQ) and 587–596 (PPAPPLPPGS). Threonine 601 is modified (phosphothreonine). The SH3-binding signature appears at 616–625 (APTVPPPLPP). Pro residues-rich tracts occupy residues 618 to 630 (TVPP…PPQP) and 641 to 652 (SPSPASPGPASP). Position 626 is a phosphothreonine (threonine 626). Serine 653 is modified (phosphoserine). Residues 666 to 677 (GAATAEGGAPEA) are compositionally biased toward low complexity. A compositionally biased stretch (pro residues) spans 682–692 (PTPPAIPPQPR).

Interacts with RAC1. Interacts with the exocyst via EXOC4 and EXOC8; required for the localization of both SH3BP1 and the exocyst to the leading edge of migrating cells. Interacts with CD2AP and CGNL1; probably part of a complex at cell junctions. Interacts with CAPZA1; recruits CAPZA1 to forming cell junctions. May interact with AFDN. Interacts with PLXND1; they dissociate upon SEMA3E binding to PLXND1 allowing SH3BP1 to transduce downstream signal through RAC1 inactivation. Interacts with ABL1, GRB2 and SRC (via SH3 domain).

Its subcellular location is the cell projection. The protein localises to the cell junction. The protein resides in the tight junction. It localises to the adherens junction. It is found in the phagocytic cup. Its subcellular location is the nucleus. The protein localises to the cytoplasm. The protein resides in the cytosol. Functionally, GTPase activating protein (GAP) which specifically converts GTP-bound Rho-type GTPases including RAC1 and CDC42 in their inactive GDP-bound form. By specifically inactivating RAC1 at the leading edge of migrating cells, it regulates the spatiotemporal organization of cell protrusions which is important for proper cell migration. Also negatively regulates CDC42 in the process of actin remodeling and the formation of epithelial cell junctions. Through its GAP activity toward RAC1 and/or CDC42 plays a specific role in phagocytosis of large particles. Specifically recruited by a PI3 kinase/PI3K-dependent mechanism to sites of large particles engagement, inactivates RAC1 and/or CDC42 allowing the reorganization of the underlying actin cytoskeleton required for engulfment. It also plays a role in angiogenesis and the process of repulsive guidance as part of a semaphorin-plexin signaling pathway. Following the binding of PLXND1 to extracellular SEMA3E it dissociates from PLXND1 and inactivates RAC1, inducing the intracellular reorganization of the actin cytoskeleton and the collapse of cells. In Homo sapiens (Human), this protein is SH3 domain-binding protein 1.